A 778-amino-acid chain; its full sequence is Dynein axonemal intermediate chain 4 (778 aa).

WD repeat units lie at residues 477 to 517, 526 to 573, 586 to 629, 633 to 673, 676 to 715, and 721 to 760; these read HCES…QTPI, LHTS…ECVD, RHIS…QYLE, AHKR…PVMG, SGQR…LDPT, and SPGV…AGGG.

Part of the multisubunit axonemal dynein complex formed at least of two heavy chains and a number of intermediate and light chains.

The protein localises to the cytoplasm. It is found in the cytoskeleton. It localises to the flagellum axoneme. Its subcellular location is the cilium axoneme. The protein resides in the dynein axonemal particle. Plays a critical role in the assembly of axonemal dynein complex. Plays a key role in ciliary motility. In Danio rerio (Zebrafish), this protein is Dynein axonemal intermediate chain 4.